The sequence spans 69 residues: FMRFamide-like neuropeptides 24 (69 aa).

The first 25 residues, 1–25 (MLSSRTSSIILILAILVAIMAVAQC), serve as a signal peptide directing secretion. Residues 26–51 (RNIQYDVEEMTPEAAFRYAQWGEIPH) constitute a propeptide that is removed on maturation. Phenylalanine amide is present on F64. Positions 68 to 69 (SI) are excised as a propeptide.

The protein belongs to the FARP (FMRFamide related peptide) family.

It localises to the secreted. Probable FMRFamide-like neuropeptides. Plays a role in behaviors associated with a sleep-like state induced by stress (SIS), acting in concert with the FMRFamide related peptide flp-13 and neuropeptide-like protein nlp-8. This chain is FMRFamide-like neuropeptides 24, found in Caenorhabditis elegans.